We begin with the raw amino-acid sequence, 2560 residues long: Plipastatin synthase subunit B (2560 aa).

Positions 7-310 (IQDIYPLSHM…NTVPVRIRSA (304 aa)) are condensation 1. The segment at 7-1042 (IQDIYPLSHM…AVKLMSLKEH (1036 aa)) is domain 1 (tyrosine-activating). Residues 496–889 (TYRQLQVRAN…QAPGVKEAAV (394 aa)) form an adenylation 1 region. One can recognise a Carrier 1 domain in the interval 965-1040 (APRTLIEADL…SMAVKLMSLK (76 aa)). Ser-1000 carries the post-translational modification O-(pantetheine 4'-phosphoryl)serine. A condensation 2 region spans residues 1052-1342 (QRDVYPLSFS…NTLAMRSKPE (291 aa)). The interval 1052–2553 (QRDVYPLSFS…DLTLDELSEI (1502 aa)) is domain 2 (D-allo-threonine-activating). The tract at residues 1527–1927 (TYRDLNEKAE…QYPMIKEAAV (401 aa)) is adenylation 2. In terms of domain architecture, Carrier 2 spans 2006 to 2080 (SPRNEIETVM…ELSARVRKDV (75 aa)). Position 2041 is an O-(pantetheine 4'-phosphoryl)serine (Ser-2041). The tract at residues 2088 to 2553 (VEGEITWTPI…DLTLDELSEI (466 aa)) is epimerization.

The protein belongs to the ATP-dependent AMP-binding enzyme family. The cofactor is pantetheine 4'-phosphate.

In terms of biological role, this protein is a multifunctional enzyme, able to activate and polymerize the amino acids Tyr and Thr as part of the biosynthesis of the lipopeptide antibiotic plipastatin. The Thr residue is further converted to the D-allo-isomer form. The activation sites for these amino acids consist of individual domains. The chain is Plipastatin synthase subunit B (ppsB) from Bacillus subtilis (strain 168).